A 332-amino-acid polypeptide reads, in one-letter code: Ribosomal RNA small subunit methyltransferase H (332 aa).

Residues 36–38, D61, F88, D114, and Q121 contribute to the S-adenosyl-L-methionine site; that span reads GGH.

This sequence belongs to the methyltransferase superfamily. RsmH family.

The protein localises to the cytoplasm. The enzyme catalyses cytidine(1402) in 16S rRNA + S-adenosyl-L-methionine = N(4)-methylcytidine(1402) in 16S rRNA + S-adenosyl-L-homocysteine + H(+). Its function is as follows. Specifically methylates the N4 position of cytidine in position 1402 (C1402) of 16S rRNA. In Pelodictyon phaeoclathratiforme (strain DSM 5477 / BU-1), this protein is Ribosomal RNA small subunit methyltransferase H.